We begin with the raw amino-acid sequence, 1240 residues long: ABC transporter B family member 15 (1240 aa).

The next 6 membrane-spanning stretches (helical) occupy residues 35 to 55 (MGLGLIGAVGDGFTTPLVLLI), 82 to 102 (VALLYVACGSWVVCFLEGYCW), 158 to 180 (LPNFLMSASTFVGSYIVGFILLW), 184 to 206 (IVGLPFIVLLVIPGLMYGRALIS), 264 to 284 (GITIGSNGITFAMWGFMSWYG), and 296 to 316 (GTVFAVAAAIAIGGVSLGGGL). In terms of domain architecture, ABC transmembrane type-1 1 spans 35–324 (MGLGLIGAVG…GLSNLKYFFE (290 aa)). In terms of domain architecture, ABC transporter 1 spans 359-595 (VEFKNVKFVY…IDGQYSTLVH (237 aa)). Position 394-401 (394-401 (GGSGSGKS)) interacts with ATP. Asn-542, Asn-605, and Asn-622 each carry an N-linked (GlcNAc...) asparagine glycan. The segment at 617–646 (SKDIRNSSRVSTLSRSSSANSVTGPSTIKN) is disordered. Residues 623-639 (SSRVSTLSRSSSANSVT) are compositionally biased toward low complexity. Asn-646 carries an N-linked (GlcNAc...) asparagine glycan. An ABC transmembrane type-1 2 domain is found at 672 to 960 (ALYGCISATL…AGSMTTDLAK (289 aa)). Helical transmembrane passes span 681-701 (LFGAIQPAYAYSLGSMVSVYF) and 714-734 (IYALSFVGLAVLSFLINISQH). Asn-769 carries an N-linked (GlcNAc...) asparagine glycan. A run of 4 helical transmembrane segments spans residues 794 to 813 (ALVVQTVSAVTIAFTMGLVI), 817 to 839 (LALVMIAVQPVIIVCFYTRRVLL), 895 to 915 (SWFAGFGLAMSQSLTSCTWAL), and 923 to 943 (LIQDGYITAKALFETFMILVS). The ABC transporter 2 domain occupies 995–1233 (VEFLDVDFSY…GPTGIYFSLV (239 aa)). N-linked (GlcNAc...) asparagine glycosylation is present at Asn-1015. 1030–1037 (GPSGSGKS) is an ATP binding site.

The protein belongs to the ABC transporter superfamily. ABCB family. Multidrug resistance exporter (TC 3.A.1.201) subfamily.

The protein localises to the membrane. The sequence is that of ABC transporter B family member 15 (ABCB15) from Arabidopsis thaliana (Mouse-ear cress).